Here is a 317-residue protein sequence, read N- to C-terminus: Glycine--tRNA ligase alpha subunit (317 aa).

It belongs to the class-II aminoacyl-tRNA synthetase family. Tetramer of two alpha and two beta subunits.

The protein localises to the cytoplasm. It carries out the reaction tRNA(Gly) + glycine + ATP = glycyl-tRNA(Gly) + AMP + diphosphate. This chain is Glycine--tRNA ligase alpha subunit, found in Pseudomonas fluorescens (strain ATCC BAA-477 / NRRL B-23932 / Pf-5).